We begin with the raw amino-acid sequence, 145 residues long: MKSARRRSRELATQGLYQWLLSGSPAGEIDAQLRGAQGYDKADHEHLDAILHGVIRDSEALSADLAPCLDRPIDQLSPVERAVLLVAAYELKNHIDIPYRVVINEAVELAKTFGGADGYKYVNGVLDKLSAKLRVDETQAAARKQ.

This sequence belongs to the NusB family.

Functionally, involved in transcription antitermination. Required for transcription of ribosomal RNA (rRNA) genes. Binds specifically to the boxA antiterminator sequence of the ribosomal RNA (rrn) operons. This Paraburkholderia phymatum (strain DSM 17167 / CIP 108236 / LMG 21445 / STM815) (Burkholderia phymatum) protein is Transcription antitermination protein NusB.